The following is a 380-amino-acid chain: Cytochrome b (380 aa).

Helical transmembrane passes span 33–53 (FGSL…FLAM), 77–98 (WLIR…YMHI), 113–133 (WNIG…GYVL), and 178–198 (FFAF…LHLL). Heme b contacts are provided by His83 and His97. Heme b is bound by residues His182 and His196. His201 contacts a ubiquinone. 4 helical membrane passes run 226–246 (YKDL…ALFA), 288–308 (LGGV…PILH), 320–340 (LTQF…WIGG), and 347–367 (FIII…VLSP).

Belongs to the cytochrome b family. The cytochrome bc1 complex contains 3 respiratory subunits (MT-CYB, CYC1 and UQCRFS1), 2 core proteins (UQCRC1 and UQCRC2) and probably 6 low-molecular weight proteins. Heme b serves as cofactor.

Its subcellular location is the mitochondrion inner membrane. Its function is as follows. Component of the ubiquinol-cytochrome c reductase complex (complex III or cytochrome b-c1 complex) that is part of the mitochondrial respiratory chain. The b-c1 complex mediates electron transfer from ubiquinol to cytochrome c. Contributes to the generation of a proton gradient across the mitochondrial membrane that is then used for ATP synthesis. This chain is Cytochrome b (mt-cyb), found in Oncorhynchus keta (Chum salmon).